Consider the following 285-residue polypeptide: Transcription factor JAMYB (285 aa).

HTH myb-type domains follow at residues 26-78 (SAEL…LNYL) and 79-133 (RPDV…QKHA). 2 DNA-binding regions (H-T-H motif) span residues 54-78 (WNAL…LNYL) and 106-129 (WSKI…RTRV).

The protein localises to the nucleus. Probable transcription factor that may be involved in the jasmonate-dependent defense responses to the rice blast fungus Magnaporthe oryzae. Does not seem to function in the salicylic acid-dependent signaling pathway. In Oryza sativa subsp. japonica (Rice), this protein is Transcription factor JAMYB.